The following is a 377-amino-acid chain: LIM/homeobox protein Lhx9 (377 aa).

LIM zinc-binding domains are found at residues 50–111 (ALCA…RFSV) and 112–174 (QRCA…LVQG). 3 disordered regions span residues 228–249 (NEND…QKTK), 309–346 (RQEN…TDLT), and 358–377 (SSLD…TNLF). Positions 248–307 (TKXMRTSFKHHQLRTMKSYFAINHNPDAKDLKQLAQKTGLTKRVLQVWFQNARAKFRRNV) form a DNA-binding region, homeobox. A compositionally biased stretch (low complexity) spans 333-346 (LTPPSTATTLTDLT). Polar residues predominate over residues 365–377 (SGSPPQTTLTNLF).

The protein localises to the nucleus. Functionally, may be involved in gonadal development. The sequence is that of LIM/homeobox protein Lhx9 (lhx9) from Psalidodon fasciatus (Banded astyanax).